We begin with the raw amino-acid sequence, 264 residues long: MKQYLDLMQKVLTEGTPKNDRTGTGTISIFGHQMRFNLQEGFPLVTTKRCHLRSIIHELLWFLQGDTNIAYLHENNVTIWDEWADENGDLGPVYGKQWRSWPAPDGRHIDQITTVMNQLKNDPDSRRIIVSAWNVGELDKMALAPCHAFFQFYVADGKLSCQLYQRSCDVFLGLPFNIASYALLVHMVAQQCDLQVGDFVWTGGDTHLYSNHLEQTNLQLSREPRPLPKLVIKRKPASIFDYRFEDFEIEGYDPHPGIKAPVAI.

Arg-21 contributes to the dUMP binding site. His-51 contributes to the (6R)-5,10-methylene-5,6,7,8-tetrahydrofolate binding site. 126–127 lines the dUMP pocket; the sequence is RR. Cys-146 serves as the catalytic Nucleophile. Residues 166–169, Asn-177, and 207–209 each bind dUMP; these read RSCD and HLY. (6R)-5,10-methylene-5,6,7,8-tetrahydrofolate is bound at residue Asp-169. Position 263 (Ala-263) interacts with (6R)-5,10-methylene-5,6,7,8-tetrahydrofolate.

It belongs to the thymidylate synthase family. Bacterial-type ThyA subfamily. Homodimer.

Its subcellular location is the cytoplasm. It catalyses the reaction dUMP + (6R)-5,10-methylene-5,6,7,8-tetrahydrofolate = 7,8-dihydrofolate + dTMP. The protein operates within pyrimidine metabolism; dTTP biosynthesis. In terms of biological role, catalyzes the reductive methylation of 2'-deoxyuridine-5'-monophosphate (dUMP) to 2'-deoxythymidine-5'-monophosphate (dTMP) while utilizing 5,10-methylenetetrahydrofolate (mTHF) as the methyl donor and reductant in the reaction, yielding dihydrofolate (DHF) as a by-product. This enzymatic reaction provides an intracellular de novo source of dTMP, an essential precursor for DNA biosynthesis. The protein is Thymidylate synthase of Klebsiella pneumoniae subsp. pneumoniae (strain ATCC 700721 / MGH 78578).